We begin with the raw amino-acid sequence, 108 residues long: Glutaredoxin-C10 (108 aa).

A Glutaredoxin domain is found at 1-107 (MERVAKLASE…PMLKNAGALW (107 aa)). A disulfide bond links C21 and C24. The short motif at 105–108 (ALWL) is the Responsive for interaction with TGA factors element.

Belongs to the glutaredoxin family. CC-type subfamily.

It localises to the cytoplasm. It is found in the nucleus. Its function is as follows. Has a glutathione-disulfide oxidoreductase activity in the presence of NADPH and glutathione reductase. Reduces low molecular weight disulfides and proteins. This is Glutaredoxin-C10 (GRXC10) from Oryza sativa subsp. japonica (Rice).